Here is a 122-residue protein sequence, read N- to C-terminus: Acidic phospholipase A2 (122 aa).

7 cysteine pairs are disulfide-bonded: cysteine 26–cysteine 115, cysteine 28–cysteine 44, cysteine 43–cysteine 95, cysteine 49–cysteine 122, cysteine 50–cysteine 88, cysteine 57–cysteine 81, and cysteine 75–cysteine 86. Ca(2+) is bound by residues tyrosine 27, glycine 29, and glycine 31. Histidine 47 is an active-site residue. Aspartate 48 is a Ca(2+) binding site. Residue aspartate 89 is part of the active site.

As to quaternary structure, may form tetramers. Ca(2+) is required as a cofactor. As to expression, expressed by the venom gland.

Its subcellular location is the secreted. The catalysed reaction is a 1,2-diacyl-sn-glycero-3-phosphocholine + H2O = a 1-acyl-sn-glycero-3-phosphocholine + a fatty acid + H(+). Functionally, PLA2 catalyzes the calcium-dependent hydrolysis of the 2-acyl groups in 3-sn-phosphoglycerides. In vivo, is non-lethal to mice when intravenously injected up to a concentration of 30 ug, however does show significant edematogenic activity at the injection site. The chain is Acidic phospholipase A2 from Lachesis acrochorda (Chocoan bushmaster).